A 664-amino-acid chain; its full sequence is Semaphorin-7A (664 aa).

A signal peptide spans 1–44 (MTPPPPGRAAPSAPRARVLSLPARFGLPLRLRLLLVFWVAAASA). Positions 53–488 (RISAVWKGQD…SQWEVSQVPL (436 aa)) constitute a Sema domain. N-linked (GlcNAc...) asparagine glycosylation is present at asparagine 102. An intrachain disulfide couples cysteine 117 to cysteine 123. Arginine 132 is modified (asymmetric dimethylarginine). A disulfide bridge links cysteine 140 with cysteine 149. Asparagine 154 and asparagine 256 each carry an N-linked (GlcNAc...) asparagine glycan. Intrachain disulfides connect cysteine 264-cysteine 364, cysteine 289-cysteine 333, cysteine 491-cysteine 509, cysteine 498-cysteine 539, cysteine 501-cysteine 516, cysteine 564-cysteine 611, and cysteine 585-cysteine 594. The interval 265–267 (RGD) is interaction with integrins. Positions 265–267 (RGD) match the Cell attachment site motif. An N-linked (GlcNAc...) asparagine glycan is attached at asparagine 328. One can recognise an Ig-like C2-type domain in the interval 542 to 627 (PKPDEAPLQK…YLREAQHWEL (86 aa)). Asparagine 600 carries an N-linked (GlcNAc...) asparagine glycan. Residue alanine 646 is the site of GPI-anchor amidated alanine attachment. A propeptide spans 647-664 (ASFWLGVLPTLILGLLVH) (removed in mature form).

Belongs to the semaphorin family. As to quaternary structure, interacts with PLXNC1. Interacts with ITGA1 and ITGB1. In terms of tissue distribution, highly expressed in activated T-cells (at protein level). Highest expression in brain. Lower in heart, thymus, spleen, testis and ovary. The expression increases in late embryonic and postnatal stages. Detected in T-cells.

The protein resides in the cell membrane. Plays an important role in integrin-mediated signaling and functions both in regulating cell migration and immune responses. Promotes formation of focal adhesion complexes, activation of the protein kinase PTK2/FAK1 and subsequent phosphorylation of MAPK1 and MAPK3. Promotes production of pro-inflammatory cytokines by monocytes and macrophages. Plays an important role in modulating inflammation and T-cell-mediated immune responses. Promotes axon growth in the embryonic olfactory bulb. Promotes attachment, spreading and dendrite outgrowth in melanocytes. The sequence is that of Semaphorin-7A (Sema7a) from Mus musculus (Mouse).